The following is a 1038-amino-acid chain: Elongation factor 3 (1038 aa).

HEAT repeat units follow at residues 93-131 (EAYL…SANK), 133-170 (STIR…VAPY), 174-211 (RCLP…VVGN), 213-249 (DIEP…TVEA), 255-287 (MEPL…LMDD), and 292-331 (QLFI…AGGS). Glu-406 contacts ADP. ABC transporter domains are found at residues 426 to 654 (IFIE…YYEL) and 680 to 995 (IRLT…EEVT). Residues Asn-716, Glu-924, Asn-927, and His-953 each contribute to the ADP site. Positions 1012–1038 (RKEKKAKDKARKEAEARGEYYSDSDEE) are disordered. The segment covering 1021 to 1031 (ARKEAEARGEY) has biased composition (basic and acidic residues).

The protein belongs to the ABC transporter superfamily. ABCF family. EF3 subfamily. Monomer.

The protein localises to the cytoplasm. The enzyme catalyses ATP + H2O = ADP + phosphate + H(+). The protein operates within protein biosynthesis; polypeptide chain elongation. Ribosome-dependent ATPase that functions in cytoplasmic translation elongation. Required for the ATP-dependent release of deacylated tRNA from the ribosomal E-site during protein biosynthesis. Stimulates the eEF1A-dependent binding of aminoacyl-tRNA to the ribosomal A-site, which has reduced affinity for tRNA as long as the E-site is occupied. Assists translation termination by stimulating the release of nascent protein from the ribosome by release factors. The polypeptide is Elongation factor 3 (Phytophthora infestans (strain T30-4) (Potato late blight agent)).